The following is a 348-amino-acid chain: Major outer membrane protein P.IB (348 aa).

The first 19 residues, 1–19, serve as a signal peptide directing secretion; sequence MKKSLIALTLAALPVAATA.

The protein belongs to the Gram-negative porin family. As to quaternary structure, homotrimer.

The protein localises to the cell outer membrane. Its function is as follows. Serves as a slightly cation selective porin. Major antigen on the gonococcal cell surface and it may have pathogenic properties in addition to its porin activity. The polypeptide is Major outer membrane protein P.IB (porB) (Neisseria gonorrhoeae).